A 554-amino-acid chain; its full sequence is Solute carrier family 22 member 1 (554 aa).

Residues 1-21 (MPTVDDILEQVGESGWFQKQA) are Cytoplasmic-facing. Residues 22 to 42 (FLILCLLSAAFAPICVGIVFL) traverse the membrane as a helical segment. Over 43–149 (GFTPDHHCQS…LVCADSWKLD (107 aa)) the chain is Extracellular. Residue asparagine 71 is glycosylated (N-linked (GlcNAc...) asparagine). The helical transmembrane segment at 150–170 (LFQSCLNAGFLFGSLGVGYFA) threads the bilayer. The Cytoplasmic segment spans residues 171–176 (DRFGRK). A helical membrane pass occupies residues 177 to 197 (LCLLGTVLVNAVSGVLMAFSP). Residues 198-206 (NYMSMLLFR) are Extracellular-facing. The chain crosses the membrane as a helical span at residues 207 to 229 (LLQGLVSKGNWMAGYTLITEFVG). The Cytoplasmic segment spans residues 230–235 (SGSRRT). The helical transmembrane segment at 236–256 (VAIMYQMAFTVGLVALTGLAY) threads the bilayer. Residues 257–262 (ALPHWR) lie on the Extracellular side of the membrane. Residues 263 to 283 (WLQLAVSLPTFLFLLYYWCVP) traverse the membrane as a helical segment. Residues 283–287 (PESPR) carry the Proline-rich sequence motif. Residues 284 to 347 (ESPRWLLSQK…FRTPRLRKRT (64 aa)) are Cytoplasmic-facing. Serine 333 carries the phosphoserine modification. Residues 348–368 (FILMYLWFTDSVLYQGLILHM) form a helical membrane-spanning segment. The Extracellular segment spans residues 369–376 (GATSGNLY). The helical transmembrane segment at 377–397 (LDFLYSALVEIPGAFIALITI) threads the bilayer. The Cytoplasmic segment spans residues 398-402 (DRVGR). A helical transmembrane segment spans residues 403-423 (IYPMAMSNLLAGAACLVMIFI). The Extracellular segment spans residues 424-431 (SPDLHWLN). A helical membrane pass occupies residues 432-452 (IIIMCVGRMGITIAIQMICLV). Over 453-464 (NAELYPTFVRNL) the chain is Cytoplasmic. Residues 465–485 (GVMVCSSLCDIGGIITPFIVF) traverse the membrane as a helical segment. Residues 486 to 492 (RLREVWQ) are Extracellular-facing. A helical transmembrane segment spans residues 493-513 (ALPLILFAVLGLLAAGVTLLL). The Cytoplasmic portion of the chain corresponds to 514–554 (PETKGVALPETMKDAENLGRKAKPKENTIYLKVQTSEPSGT). The residue at position 541 (threonine 541) is a Phosphothreonine.

This sequence belongs to the major facilitator (TC 2.A.1) superfamily. Organic cation transporter (TC 2.A.1.19) family. In terms of processing, phosphorylated. In terms of tissue distribution, widely expressed with high level in liver. In liver, expressed around the central vein. Expressed in kidney. Expressed in small intestine enterocytes. Localized to peritubular myoid cells, Leydig cells and moderately to the basal membrane of Sertoli cells in testes. Expressed in tracheal and bronchial ciliated epithelium in the respiratory tract. Also expressed in skeletal muscle, stomach, spleen, heart, placentacolon, brain, granulycytes and lympohocytes. Expressed in liver and in glial cell lines. As to expression, expressed in glial cell lines. Not expressed in liver.

The protein resides in the basolateral cell membrane. It localises to the apical cell membrane. Its subcellular location is the lateral cell membrane. The protein localises to the basal cell membrane. It is found in the cell membrane. The enzyme catalyses 1-methylnicotinamide(out) = 1-methylnicotinamide(in). It carries out the reaction dopamine(out) = dopamine(in). It catalyses the reaction serotonin(out) = serotonin(in). The catalysed reaction is (R)-adrenaline(out) = (R)-adrenaline(in). The enzyme catalyses histamine(out) = histamine(in). It carries out the reaction guanidine(out) = guanidine(in). It catalyses the reaction acetylcholine(in) = acetylcholine(out). The catalysed reaction is thiamine(in) = thiamine(out). The enzyme catalyses agmatine(out) = agmatine(in). It carries out the reaction putrescine(out) = putrescine(in). It catalyses the reaction spermidine(in) = spermidine(out). The catalysed reaction is L-histidyl-L-proline diketopiperazine(in) = L-histidyl-L-proline diketopiperazine(out). The enzyme catalyses (R)-salsolinol(in) = (R)-salsolinol(out). It carries out the reaction prostaglandin F2alpha(out) = prostaglandin F2alpha(in). It catalyses the reaction prostaglandin E2(out) = prostaglandin E2(in). Phosphorylation of the transporter leads to changes in its substrate affinity, resulting in a regulation of the transport activity. In contrast with rat ortholog, ASP uptake is inhibited by protein kinase A (PKA) and C (PKC) activation. ASP uptake is also endogenously activated by calmodulin, the calmodulin-dependent kinase II and LCK tyrosine kinase. Inhibited by cGMP, most likely through a cGMP-binding protein that interacts with OCT1. Its function is as follows. Electrogenic voltage-dependent transporter that mediates the transport of a variety of organic cations such as endogenous bioactive amines, cationic drugs and xenobiotics. Functions as a pH- and Na(+)-independent, bidirectional transporter. Cation cellular uptake or release is driven by the electrochemical potential (i.e. membrane potential and concentration gradient) and substrate selectivity. Hydrophobicity is a major requirement for recognition in polyvalent substrates and inhibitors. Primarily expressed at the basolateral membrane of hepatocytes and proximal tubules and involved in the uptake and disposition of cationic compounds by hepatic and renal clearance from the blood flow. Most likely functions as an uptake carrier in enterocytes contributing to the intestinal elimination of organic cations from the systemic circulation. Transports endogenous monoamines such as N-1-methylnicotinamide (NMN), guanidine, histamine, neurotransmitters dopamine, serotonin and adrenaline. Also transports natural polyamines such as spermidine, agmatine and putrescine at low affinity, but relatively high turnover. Involved in the hepatic uptake of vitamin B1/thiamine, hence regulating hepatic lipid and energy metabolism. Mediates the bidirectional transport of acetylcholine (ACh) at the apical membrane of ciliated cell in airway epithelium, thereby playing a role in luminal release of ACh from bronchial epithelium. Transports dopaminergic neuromodulators cyclo(his-pro) and salsolinol with lower efficency. Also capable of transporting non-amine endogenous compounds such as prostaglandin E2 (PGE2) and prostaglandin F2-alpha (PGF2-alpha). May contribute to the transport of cationic compounds in testes across the blood-testis-barrier. Also involved in the uptake of xenobiotics tributylmethylammonium (TBuMA), quinidine, N-methyl-quinine (NMQ), N-methyl-quinidine (NMQD) N-(4,4-azo-n-pentyl)-quinuclidine (APQ), azidoprocainamide methoiodide (AMP), N-(4,4-azo-n-pentyl)-21-deoxyajmalinium (APDA) and 4-(4-(dimethylamino)styryl)-N-methylpyridinium (ASP). In terms of biological role, mediates the uptake of 1-methyl-4-phenylpyridinium (MPP(+)). Not able to uptake 1-methyl-4-phenylpyridinium (MPP(+)). In Homo sapiens (Human), this protein is Solute carrier family 22 member 1.